The primary structure comprises 137 residues: Maltose regulon regulatory protein MalI (137 aa).

The region spanning 6-60 (VTITEVAKHAGVSVTTVSMVLGNKGRISPDTIEKVNASVEALGYIRNRAAANLRS) is the HTH lacI-type domain. The segment at residues 8–27 (ITEVAKHAGVSVTTVSMVLG) is a DNA-binding region (H-T-H motif).

Functionally, repressor for the malX and malY genes. The protein is Maltose regulon regulatory protein MalI (malI) of Vibrio furnissii.